Reading from the N-terminus, the 296-residue chain is Phosphatidylserine decarboxylase proenzyme (296 aa).

Residues D92, H149, and S251 each act as charge relay system; for autoendoproteolytic cleavage activity in the active site. S251 serves as the catalytic Schiff-base intermediate with substrate; via pyruvic acid; for decarboxylase activity. Residue S251 is modified to Pyruvic acid (Ser); by autocatalysis.

Belongs to the phosphatidylserine decarboxylase family. PSD-B subfamily. Prokaryotic type I sub-subfamily. In terms of assembly, heterodimer of a large membrane-associated beta subunit and a small pyruvoyl-containing alpha subunit. Pyruvate is required as a cofactor. In terms of processing, is synthesized initially as an inactive proenzyme. Formation of the active enzyme involves a self-maturation process in which the active site pyruvoyl group is generated from an internal serine residue via an autocatalytic post-translational modification. Two non-identical subunits are generated from the proenzyme in this reaction, and the pyruvate is formed at the N-terminus of the alpha chain, which is derived from the carboxyl end of the proenzyme. The autoendoproteolytic cleavage occurs by a canonical serine protease mechanism, in which the side chain hydroxyl group of the serine supplies its oxygen atom to form the C-terminus of the beta chain, while the remainder of the serine residue undergoes an oxidative deamination to produce ammonia and the pyruvoyl prosthetic group on the alpha chain. During this reaction, the Ser that is part of the protease active site of the proenzyme becomes the pyruvoyl prosthetic group, which constitutes an essential element of the active site of the mature decarboxylase.

The protein localises to the cell membrane. It catalyses the reaction a 1,2-diacyl-sn-glycero-3-phospho-L-serine + H(+) = a 1,2-diacyl-sn-glycero-3-phosphoethanolamine + CO2. It functions in the pathway phospholipid metabolism; phosphatidylethanolamine biosynthesis; phosphatidylethanolamine from CDP-diacylglycerol: step 2/2. In terms of biological role, catalyzes the formation of phosphatidylethanolamine (PtdEtn) from phosphatidylserine (PtdSer). The sequence is that of Phosphatidylserine decarboxylase proenzyme from Hahella chejuensis (strain KCTC 2396).